The chain runs to 345 residues: Tryptophan--tRNA ligase (345 aa).

ATP-binding positions include 21–23 (QPT) and 30–31 (GN). Residues 22-31 (PTADSYHLGN) carry the 'HIGH' region motif. Residue D147 participates in L-tryptophan binding. Residues 159–161 (GED), I198, and 207–211 (KMSKS) contribute to the ATP site. The 'KMSKS' region signature appears at 207–211 (KMSKS).

Belongs to the class-I aminoacyl-tRNA synthetase family. In terms of assembly, homodimer.

The protein localises to the cytoplasm. The enzyme catalyses tRNA(Trp) + L-tryptophan + ATP = L-tryptophyl-tRNA(Trp) + AMP + diphosphate + H(+). Catalyzes the attachment of tryptophan to tRNA(Trp). The sequence is that of Tryptophan--tRNA ligase from Corynebacterium glutamicum (strain ATCC 13032 / DSM 20300 / JCM 1318 / BCRC 11384 / CCUG 27702 / LMG 3730 / NBRC 12168 / NCIMB 10025 / NRRL B-2784 / 534).